Reading from the N-terminus, the 144-residue chain is Ribosomal RNA large subunit methyltransferase H (144 aa).

S-adenosyl-L-methionine-binding positions include Leu-63, Gly-92, and 111–116; that span reads LSPMTF.

Belongs to the RNA methyltransferase RlmH family. Homodimer.

It is found in the cytoplasm. The enzyme catalyses pseudouridine(1915) in 23S rRNA + S-adenosyl-L-methionine = N(3)-methylpseudouridine(1915) in 23S rRNA + S-adenosyl-L-homocysteine + H(+). Its function is as follows. Specifically methylates the pseudouridine at position 1915 (m3Psi1915) in 23S rRNA. This chain is Ribosomal RNA large subunit methyltransferase H, found in Parasynechococcus marenigrum (strain WH8102).